The primary structure comprises 272 residues: Phosphate import ATP-binding protein PstB 1 (272 aa).

Residues 26 to 267 (ITIENLDLHY…PMKKQTEDYI (242 aa)) enclose the ABC transporter domain. 58–65 (GPSGCGKS) contacts ATP.

Belongs to the ABC transporter superfamily. Phosphate importer (TC 3.A.1.7) family. As to quaternary structure, the complex is composed of two ATP-binding proteins (PstB), two transmembrane proteins (PstC and PstA) and a solute-binding protein (PstS).

The protein resides in the cell inner membrane. The enzyme catalyses phosphate(out) + ATP + H2O = ADP + 2 phosphate(in) + H(+). Its function is as follows. Part of the ABC transporter complex PstSACB involved in phosphate import. Responsible for energy coupling to the transport system. The polypeptide is Phosphate import ATP-binding protein PstB 1 (Vibrio vulnificus (strain YJ016)).